Consider the following 956-residue polypeptide: Isoleucine--tRNA ligase (956 aa).

A 'HIGH' region motif is present at residues Pro-60–His-70. L-isoleucyl-5'-AMP is bound at residue Glu-583. Residues Lys-624–Ser-628 carry the 'KMSKS' region motif. Residue Lys-627 coordinates ATP. Zn(2+) contacts are provided by Cys-921, Cys-924, Cys-938, and Cys-941.

Belongs to the class-I aminoacyl-tRNA synthetase family. IleS type 1 subfamily. As to quaternary structure, monomer. Zn(2+) serves as cofactor.

It is found in the cytoplasm. It carries out the reaction tRNA(Ile) + L-isoleucine + ATP = L-isoleucyl-tRNA(Ile) + AMP + diphosphate. Catalyzes the attachment of isoleucine to tRNA(Ile). As IleRS can inadvertently accommodate and process structurally similar amino acids such as valine, to avoid such errors it has two additional distinct tRNA(Ile)-dependent editing activities. One activity is designated as 'pretransfer' editing and involves the hydrolysis of activated Val-AMP. The other activity is designated 'posttransfer' editing and involves deacylation of mischarged Val-tRNA(Ile). This chain is Isoleucine--tRNA ligase, found in Aquifex aeolicus (strain VF5).